A 157-amino-acid polypeptide reads, in one-letter code: Mediator of RNA polymerase II transcription subunit 22 (157 aa).

The protein belongs to the Mediator complex subunit 22 family. As to quaternary structure, component of the Mediator complex.

The protein resides in the nucleus. In terms of biological role, component of the Mediator complex, a coactivator involved in the regulated transcription of nearly all RNA polymerase II-dependent genes. Mediator functions as a bridge to convey information from gene-specific regulatory proteins to the basal RNA polymerase II transcription machinery. Mediator is recruited to promoters by direct interactions with regulatory proteins and serves as a scaffold for the assembly of a functional preinitiation complex with RNA polymerase II and the general transcription factors. In Caenorhabditis elegans, this protein is Mediator of RNA polymerase II transcription subunit 22 (mdt-22).